The chain runs to 166 residues: Small ribosomal subunit protein uS5 (166 aa).

In terms of domain architecture, S5 DRBM spans 11-74 (LQEKLIAVNR…EKARRNMITV (64 aa)).

This sequence belongs to the universal ribosomal protein uS5 family. In terms of assembly, part of the 30S ribosomal subunit. Contacts proteins S4 and S8.

Its function is as follows. With S4 and S12 plays an important role in translational accuracy. Located at the back of the 30S subunit body where it stabilizes the conformation of the head with respect to the body. The sequence is that of Small ribosomal subunit protein uS5 from Histophilus somni (strain 2336) (Haemophilus somnus).